Consider the following 69-residue polypeptide: Mitotic-spindle organizing protein 1 (69 aa).

Belongs to the MOZART1 family. In terms of assembly, part of the gamma-tubulin complex.

Its subcellular location is the cytoplasm. It localises to the cytoskeleton. It is found in the microtubule organizing center. The protein resides in the spindle. Functionally, required for gamma-tubulin complex recruitment to the microtubule organizing centers (MTOCs). In Picea sitchensis (Sitka spruce), this protein is Mitotic-spindle organizing protein 1.